A 217-amino-acid chain; its full sequence is Vesicle transport through interaction with t-SNAREs homolog 1A (217 aa).

At 1–192 (MSSDFEGYEQ…GMLRRIIQNR (192 aa)) the chain is on the cytoplasmic side. Coiled coils occupy residues 31 to 92 (PDEK…KRSR) and 112 to 178 (ENQR…GKSS). Residues 193-213 (ILLVILGIIVVITILMAITFS) form a helical membrane-spanning segment. Residues 214-217 (VRRH) are Extracellular-facing.

It belongs to the VTI1 family. Interacts with distinct SNARE complexes that contain either STX5 or STX6. Interacts with NAPA and, to a lesser extent, with NAPG. Identified in a complex containing STX6, STX12, VAMP4 and VTI1A.

It localises to the cytoplasmic vesicle. It is found in the golgi apparatus membrane. Its function is as follows. V-SNARE that mediates vesicle transport pathways through interactions with t-SNAREs on the target membrane. These interactions are proposed to mediate aspects of the specificity of vesicle trafficking and to promote fusion of the lipid bilayers. Involved in vesicular transport from the late endosomes to the trans-Golgi network. Along with VAMP7, involved in an non-conventional RAB1-dependent traffic route to the cell surface used by KCNIP1 and KCND2. May be involved in increased cytokine secretion associated with cellular senescence. This chain is Vesicle transport through interaction with t-SNAREs homolog 1A (VTI1A), found in Homo sapiens (Human).